Reading from the N-terminus, the 232-residue chain is Ureidoacrylate amidohydrolase RutB (232 aa).

Aspartate 26 functions as the Proton acceptor in the catalytic mechanism. Lysine 135 is an active-site residue. The active-site Nucleophile is cysteine 168.

It belongs to the isochorismatase family. RutB subfamily.

The catalysed reaction is (Z)-3-ureidoacrylate + H2O + H(+) = (Z)-3-aminoacrylate + NH4(+) + CO2. It carries out the reaction (Z)-3-ureidoacrylate + H2O = (Z)-3-aminoacrylate + carbamate + H(+). The enzyme catalyses (Z)-2-methylureidoacrylate + H2O + H(+) = (Z)-2-methylaminoacrylate + NH4(+) + CO2. Functionally, hydrolyzes ureidoacrylate to form aminoacrylate and carbamate. The carbamate hydrolyzes spontaneously, thereby releasing one of the nitrogen atoms of the pyrimidine ring as ammonia and one of its carbon atoms as CO2. This chain is Ureidoacrylate amidohydrolase RutB, found in Cronobacter sakazakii (strain ATCC BAA-894) (Enterobacter sakazakii).